A 1026-amino-acid polypeptide reads, in one-letter code: MRFFALFIYRPVATILIAAAITLCGILGFRLLPVAPLPQVDFPVIMVSASLPGASPETMASSVATPLERSLGRIAGVNEMTSSSSLGSTRIILEFNFDRDINGAARDVQAAINAAQSLLPGGMPSRPTYRKANPSDAPIMILTLTSESWSQGKLYDFASTQLAQTIAQIDGVGDVDVGGSSLPAVRVGLNPQALFNQGVSLDEVREAIDSANVRRPQGAIEDSVHRWQIQTNDELKTAAEYQPLIIHYNNGAAVRLGDVASVTDSVQDVRNAGMTNAKPAILLMIRKLPEANIIQTVDGIRAKLPELRAMIPAAIDLQIAQDRSPTIRASLQEVEETLAISVALVIMVVFLFLRSGRATLIPAVAVPVSLIGTFAAMYLCGFSLNNLSLMALTIATGFVVDDAIVVLENIARHLEAGMKPLQAALQGTREVGFTVISMSLSLVAVFLPLLLMGGLPGRLLREFAVTLSVAIGISLVVSLTLTPMMCGWMLKSSKPRTQPRKRGVGRLLVALQQGYGTSLKWVLNHTRLVGVVFLGTVALNIWLYIAIPKTFFPEQDTGVLMGGIQADQSISFQAMRGKLQDFMKIIRDDPAVNNVTGFTGGSRVNSGMMFITLKPRGERKETAQQIIDRLRVKLAKEPGARLFLMAVQDIRVGGRQANASYQYTLLSDSLAALREWEPKIRKALSALPQLADVNSDQQDNGAEMNLIYDRDTMSRLGIDVQAANSLLNNAFGQRQISTIYQPMNQYKVVMEVDPRYSQDISALEKMFVINRDGKAIPLSYFAQWRPANAPLSVNHQGLSAASTIAFNLPTGTSLSQATEAINRTMTQLGVPPTVRGSFSGTAQVFQQTMNSQLILIVAAIATVYIVLGILYESYVHPLTILSTLPSAGVGALLALELFNAPFSLIALIGIMLLIGIVKKNAIMMVDFALEAQRSGGLTPAQAIFQACLLRFRPIMMTTLAALFGALPLVLSGGDGSELRQPLGITIVGGLVMSQLLTLYTTPVVYLFFDRLRLRFSRKNSKPVVEI.

11 helical membrane passes run 15 to 35 (ILIAAAITLCGILGFRLLPVA), 333 to 353 (EVEETLAISVALVIMVVFLFL), 360 to 380 (LIPAVAVPVSLIGTFAAMYLC), 387 to 407 (LSLMALTIATGFVVDDAIVVL), 431 to 451 (VGFTVISMSLSLVAVFLPLLL), 463 to 483 (FAVTLSVAIGISLVVSLTLTP), 528 to 548 (LVGVVFLGTVALNIWLYIAIP), 853 to 873 (LILIVAAIATVYIVLGILYES), 897 to 917 (LFNAPFSLIALIGIMLLIGIV), 953 to 973 (PIMMTTLAALFGALPLVLSGG), and 984 to 1004 (ITIVGGLVMSQLLTLYTTPVV).

It belongs to the resistance-nodulation-cell division (RND) (TC 2.A.6) family. MdtC subfamily. In terms of assembly, part of a tripartite efflux system composed of MdtA, MdtB and MdtC. MdtC forms a heteromultimer with MdtB.

It is found in the cell inner membrane. The chain is Multidrug resistance protein MdtC from Salmonella choleraesuis (strain SC-B67).